The primary structure comprises 67 residues: Large ribosomal subunit protein bL35 (67 aa).

The protein belongs to the bacterial ribosomal protein bL35 family.

This is Large ribosomal subunit protein bL35 from Bartonella tribocorum (strain CIP 105476 / IBS 506).